Reading from the N-terminus, the 665-residue chain is UvrABC system protein B (665 aa).

In terms of domain architecture, Helicase ATP-binding spans Ala25–Ile178. Gly38–Thr45 lines the ATP pocket. The Beta-hairpin motif lies at Tyr91–Ile114. The 167-residue stretch at Gln429–Ile595 folds into the Helicase C-terminal domain. In terms of domain architecture, UVR spans Pro626–Lys661.

It belongs to the UvrB family. As to quaternary structure, forms a heterotetramer with UvrA during the search for lesions. Interacts with UvrC in an incision complex.

It localises to the cytoplasm. In terms of biological role, the UvrABC repair system catalyzes the recognition and processing of DNA lesions. A damage recognition complex composed of 2 UvrA and 2 UvrB subunits scans DNA for abnormalities. Upon binding of the UvrA(2)B(2) complex to a putative damaged site, the DNA wraps around one UvrB monomer. DNA wrap is dependent on ATP binding by UvrB and probably causes local melting of the DNA helix, facilitating insertion of UvrB beta-hairpin between the DNA strands. Then UvrB probes one DNA strand for the presence of a lesion. If a lesion is found the UvrA subunits dissociate and the UvrB-DNA preincision complex is formed. This complex is subsequently bound by UvrC and the second UvrB is released. If no lesion is found, the DNA wraps around the other UvrB subunit that will check the other stand for damage. In Cyanothece sp. (strain PCC 7425 / ATCC 29141), this protein is UvrABC system protein B.